Here is a 323-residue protein sequence, read N- to C-terminus: E3 ubiquitin-protein ligase makorin (323 aa).

2 C3H1-type zinc fingers span residues 1–28 and 29–56; these read MSDRILCKFFVHGSCLKGENCEFSHDSK and DPPNNVCTFYQKRICLYGSRCRYDHVRA. The segment covering 62-74 has biased composition (low complexity); it reads LSSDSESLDRSIS. The tract at residues 62 to 92 is disordered; the sequence is LSSDSESLDRSISTTPSRHLQQQGDNNDGDK. Residues 75 to 87 are compositionally biased toward polar residues; the sequence is TTPSRHLQQQGDN. A C3H1-type 3 zinc finger spans residues 101 to 128; it reads PREYPICSFAAAGDCPRGNQCPHMHGDL. Residues 129-158 are makorin-type Cys-His; it reads CNTCGKKCLHPFRPEEREEHTKECEKKQKH. The RING-type zinc-finger motif lies at 170–228; sequence CSVCLDRILSKATPGERKFGLLTECDHPFCIQCIRNWRSSAPVSGMDVNSTLRACPICR. A C3H1-type 4 zinc finger spans residues 257–286; sequence KLRSIDCKHFNFGNGNCPFGASCFYKHAYS.

It carries out the reaction S-ubiquitinyl-[E2 ubiquitin-conjugating enzyme]-L-cysteine + [acceptor protein]-L-lysine = [E2 ubiquitin-conjugating enzyme]-L-cysteine + N(6)-ubiquitinyl-[acceptor protein]-L-lysine.. Its pathway is protein modification; protein ubiquitination. E3 ubiquitin ligase catalyzing the covalent attachment of ubiquitin moieties onto substrate proteins. The chain is E3 ubiquitin-protein ligase makorin (MKRN) from Arabidopsis thaliana (Mouse-ear cress).